The sequence spans 122 residues: Large ribosomal subunit protein uL14 (122 aa).

The protein belongs to the universal ribosomal protein uL14 family. In terms of assembly, part of the 50S ribosomal subunit. Forms a cluster with proteins L3 and L19. In the 70S ribosome, L14 and L19 interact and together make contacts with the 16S rRNA in bridges B5 and B8.

In terms of biological role, binds to 23S rRNA. Forms part of two intersubunit bridges in the 70S ribosome. The polypeptide is Large ribosomal subunit protein uL14 (Rhodopirellula baltica (strain DSM 10527 / NCIMB 13988 / SH1)).